The sequence spans 83 residues: Weak neurotoxin WNTX33 (83 aa).

A signal peptide spans 1–21 (MKTLLLTLVVVTIVCLDLGYS). 4 disulfides stabilise this stretch: Cys24-Cys45, Cys38-Cys62, Cys64-Cys75, and Cys76-Cys81.

It belongs to the three-finger toxin family. Short-chain subfamily. Expressed by the venom gland.

It is found in the secreted. The protein is Weak neurotoxin WNTX33 of Ophiophagus hannah (King cobra).